Here is a 294-residue protein sequence, read N- to C-terminus: UDP-3-O-acyl-N-acetylglucosamine deacetylase (294 aa).

3 residues coordinate Zn(2+): His-75, His-232, and Asp-236. Residue His-259 is the Proton donor of the active site.

Belongs to the LpxC family. Zn(2+) serves as cofactor.

The catalysed reaction is a UDP-3-O-[(3R)-3-hydroxyacyl]-N-acetyl-alpha-D-glucosamine + H2O = a UDP-3-O-[(3R)-3-hydroxyacyl]-alpha-D-glucosamine + acetate. Its pathway is glycolipid biosynthesis; lipid IV(A) biosynthesis; lipid IV(A) from (3R)-3-hydroxytetradecanoyl-[acyl-carrier-protein] and UDP-N-acetyl-alpha-D-glucosamine: step 2/6. Its function is as follows. Catalyzes the hydrolysis of UDP-3-O-myristoyl-N-acetylglucosamine to form UDP-3-O-myristoylglucosamine and acetate, the committed step in lipid A biosynthesis. This Campylobacter curvus (strain 525.92) protein is UDP-3-O-acyl-N-acetylglucosamine deacetylase.